A 203-amino-acid polypeptide reads, in one-letter code: Ras-related protein Rab-18 (203 aa).

Residues S20, G23, K24, S25, S26, D37, P38, T43, G69, K126, D128, and A155 each coordinate GTP. The Effector region motif lies at Q40 to F48. S-geranylgeranyl cysteine attachment occurs at residues C201 and C203. C203 carries the cysteine methyl ester modification.

The protein belongs to the small GTPase superfamily. Rab family.

It carries out the reaction GTP + H2O = GDP + phosphate + H(+). The small GTPases Rab are key regulators of intracellular membrane trafficking, from the formation of transport vesicles to their fusion with membranes. Rabs cycle between an inactive GDP-bound form and an active GTP-bound form that is able to recruit to membranes different sets of downstream effectors directly responsible for vesicle formation, movement, tethering and fusion. Plays a role in apical endocytosis/recycling. May be implicated in transport between the plasma membrane and early endosomes. Plays a role in the shedding of pathogen spores from intestinal cells. The sequence is that of Ras-related protein Rab-18 (rab-18) from Caenorhabditis elegans.